A 423-amino-acid chain; its full sequence is Serine--tRNA ligase (423 aa).

The disordered stretch occupies residues 107–130 (PHDSVPDGKSENDNREIRQWGAPP). Positions 110 to 124 (SVPDGKSENDNREIR) are enriched in basic and acidic residues. 231–233 (TGE) contributes to the L-serine binding site. 262–264 (RSE) lines the ATP pocket. Glutamate 285 serves as a coordination point for L-serine. 349–352 (EISS) is a binding site for ATP. Residue serine 385 participates in L-serine binding.

Belongs to the class-II aminoacyl-tRNA synthetase family. Type-1 seryl-tRNA synthetase subfamily. Homodimer. The tRNA molecule binds across the dimer.

Its subcellular location is the cytoplasm. It carries out the reaction tRNA(Ser) + L-serine + ATP = L-seryl-tRNA(Ser) + AMP + diphosphate + H(+). The enzyme catalyses tRNA(Sec) + L-serine + ATP = L-seryl-tRNA(Sec) + AMP + diphosphate + H(+). It participates in aminoacyl-tRNA biosynthesis; selenocysteinyl-tRNA(Sec) biosynthesis; L-seryl-tRNA(Sec) from L-serine and tRNA(Sec): step 1/1. In terms of biological role, catalyzes the attachment of serine to tRNA(Ser). Is also able to aminoacylate tRNA(Sec) with serine, to form the misacylated tRNA L-seryl-tRNA(Sec), which will be further converted into selenocysteinyl-tRNA(Sec). This Coxiella burnetii (strain Dugway 5J108-111) protein is Serine--tRNA ligase.